Here is a 350-residue protein sequence, read N- to C-terminus: Dihydroorotase (350 aa).

Zn(2+)-binding residues include His-17 and His-19. Substrate is bound by residues 19–21 (HLR) and Asn-45. 3 residues coordinate Zn(2+): Lys-103, His-140, and His-178. Position 103 is an N6-carboxylysine (Lys-103). His-140 provides a ligand contact to substrate. Leu-224 serves as a coordination point for substrate. Residue Asp-252 participates in Zn(2+) binding. Asp-252 is an active-site residue. Substrate-binding residues include His-256 and Ala-268.

This sequence belongs to the metallo-dependent hydrolases superfamily. DHOase family. Class II DHOase subfamily. Homodimer. It depends on Zn(2+) as a cofactor.

The catalysed reaction is (S)-dihydroorotate + H2O = N-carbamoyl-L-aspartate + H(+). It functions in the pathway pyrimidine metabolism; UMP biosynthesis via de novo pathway; (S)-dihydroorotate from bicarbonate: step 3/3. In terms of biological role, catalyzes the reversible cyclization of carbamoyl aspartate to dihydroorotate. This Buchnera aphidicola subsp. Acyrthosiphon pisum (strain 5A) protein is Dihydroorotase.